The following is a 426-amino-acid chain: Anhydromevalonate phosphate decarboxylase (426 aa).

N148 and E211 together coordinate Mn(2+). D255 serves as the catalytic Proton acceptor.

This sequence belongs to the UbiD family. Prenylated FMN serves as cofactor. It depends on Mn(2+) as a cofactor.

It carries out the reaction (2E)-3-methyl-5-phosphooxypent-2-enoate + H(+) = isopentenyl phosphate + CO2. It participates in isoprenoid biosynthesis; isopentenyl diphosphate biosynthesis via mevalonate pathway. In terms of biological role, catalyzes the conversion of trans-anhydromevalonate 5-phosphate (tAHMP) into isopentenyl phosphate. Involved in the archaeal mevalonate (MVA) pathway, which provides fundamental precursors for isoprenoid biosynthesis, such as isopentenyl diphosphate (IPP) and dimethylallyl diphosphate (DMAPP). This is Anhydromevalonate phosphate decarboxylase from Archaeoglobus fulgidus (strain ATCC 49558 / DSM 4304 / JCM 9628 / NBRC 100126 / VC-16).